A 389-amino-acid polypeptide reads, in one-letter code: Serpin-Z3 (389 aa).

The RCL stretch occupies residues 337 to 361; sequence GTEAAAVSVAIMMPQCLMRNPDFVA.

It belongs to the serpin family.

Its function is as follows. Probable serine protease inhibitor. This Arabidopsis thaliana (Mouse-ear cress) protein is Serpin-Z3.